The chain runs to 541 residues: 2-hydroxyacylsphingosine 1-beta-galactosyltransferase (541 aa).

The first 20 residues, 1-20 (MKSYTPYFMLLWSAVGIARA), serve as a signal peptide directing secretion. N-linked (GlcNAc...) asparagine glycans are attached at residues asparagine 78, asparagine 333, and asparagine 442. The helical transmembrane segment at 472-492 (YFLLDIAFVLLLGAVALYFIV) threads the bilayer.

It belongs to the UDP-glycosyltransferase family. As to expression, brain, restricted to the oligodendrocyte-containing cell layers of cerebrum and cerebellum.

It localises to the membrane. Its subcellular location is the endoplasmic reticulum. It catalyses the reaction an N-acylsphing-4-enine + UDP-alpha-D-galactose = a beta-D-galactosyl-(1&lt;-&gt;1')-N-acylsphing-4-enine + UDP + H(+). The catalysed reaction is N-(2-hydroxy-hexanoyl)-sphing-4-enine + UDP-alpha-D-galactose = N-(2-hydroxy-hexanoyl)-beta-D-galactosyl-sphing-4-enine + UDP + H(+). The enzyme catalyses N-(2-hydroxy-hexanoyl)-sphinganine + UDP-alpha-D-galactose = N-(2-hydroxyhexanoyl)-beta-D-galactosylsphinganine + UDP + H(+). It carries out the reaction an N-acyl-sphingoid base + UDP-alpha-D-galactose = a D-galactosylceramide + UDP + H(+). The protein operates within sphingolipid metabolism; galactosylceramide biosynthesis. Catalyzes the transfer of galactose to ceramide, a key enzymatic step in the biosynthesis of galactocerebrosides, which are abundant sphingolipids of the myelin membrane of the central nervous system and peripheral nervous system. Galactosylates both hydroxy- and non-hydroxy fatty acid-containing ceramides and diglycerides. This chain is 2-hydroxyacylsphingosine 1-beta-galactosyltransferase, found in Rattus norvegicus (Rat).